A 288-amino-acid polypeptide reads, in one-letter code: Quinate/shikimate dehydrogenase (288 aa).

Substrate-binding residues include K71 and D107. Residues 132–135 (AGGA), 155–158 (NRRD), K205, 232–235 (CVYN), and G255 contribute to the NAD(+) site.

Belongs to the shikimate dehydrogenase family. Homodimer.

It catalyses the reaction L-quinate + NAD(+) = 3-dehydroquinate + NADH + H(+). The enzyme catalyses L-quinate + NADP(+) = 3-dehydroquinate + NADPH + H(+). It carries out the reaction shikimate + NADP(+) = 3-dehydroshikimate + NADPH + H(+). The catalysed reaction is shikimate + NAD(+) = 3-dehydroshikimate + NADH + H(+). It participates in metabolic intermediate biosynthesis; chorismate biosynthesis; chorismate from D-erythrose 4-phosphate and phosphoenolpyruvate: step 4/7. Its function is as follows. The actual biological function of YdiB remains unclear, nor is it known whether 3-dehydroshikimate or quinate represents the natural substrate. Catalyzes the reversible NAD-dependent reduction of both 3-dehydroshikimate (DHSA) and 3-dehydroquinate to yield shikimate (SA) and quinate, respectively. It can use both NAD or NADP for catalysis, however it has higher catalytic efficiency with NAD. The sequence is that of Quinate/shikimate dehydrogenase from Escherichia coli O157:H7.